The following is a 377-amino-acid chain: NADH dehydrogenase [ubiquinone] 1 alpha subcomplex subunit 9, mitochondrial (377 aa).

The N-terminal 35 residues, 1-35 (MAAAVRFQVVRALPMSRPAISAAATSVFCSSSHRQ), are a transit peptide targeting the mitochondrion. Lys175 is subject to N6-succinyllysine. An N6-acetyllysine mark is found at Lys189 and Lys370.

This sequence belongs to the complex I NDUFA9 subunit family. In terms of assembly, complex I is composed of 45 different subunits. This a component of the hydrophobic protein fraction. Interacts with BLOC1S1. Interacts with SLC2A4. Interacts with CLOCK. Interacts with RAB5IF. It depends on FAD as a cofactor. In terms of processing, acetylated on lysine residues. BLOC1S1 is required for acetylation. Acetylated by CLOCK in a circadian manner. In terms of tissue distribution, expressed by the principal cells of the epididymis. Detected in flagella of epididymal sperm (at protein level).

The protein resides in the mitochondrion matrix. In terms of biological role, accessory subunit of the mitochondrial membrane respiratory chain NADH dehydrogenase (Complex I), that is believed not to be involved in catalysis. Complex I functions in the transfer of electrons from NADH to the respiratory chain. The immediate electron acceptor for the enzyme is believed to be ubiquinone. The sequence is that of NADH dehydrogenase [ubiquinone] 1 alpha subcomplex subunit 9, mitochondrial from Rattus norvegicus (Rat).